Reading from the N-terminus, the 329-residue chain is VSG expression site-associated protein 221A (329 aa).

The signal sequence occupies residues 1–23 (MKVEIVELVVLLFSVTCVDAWLQ). 3 N-linked (GlcNAc...) asparagine glycosylation sites follow: Asn-73, Asn-294, and Asn-308.

In terms of biological role, not known but may be related to activation of the variant surface glycoprotein genes. The protein is VSG expression site-associated protein 221A of Trypanosoma brucei brucei.